The sequence spans 175 residues: MLDLGLSKMALIGVVALVVLGPERLPRVARTAGALFGRAQRYINDVKAEVSREIELDALRTMKTDFEQAARNVENTIHDNLREHERDLNAAWNSAVSPGGSAAADAPDGPSAASGEPSWRTIAAAPAKRRNWRVKKAVTPVWYKRATMRRTQVQSGAARVARHRPASLRRPARFL.

Residues 1–21 form a helical membrane-spanning segment; it reads MLDLGLSKMALIGVVALVVLG. The span at 94-115 shows a compositional bias: low complexity; that stretch reads SAVSPGGSAAADAPDGPSAASG. Disordered regions lie at residues 94 to 118 and 153 to 175; these read SAVS…GEPS and VQSG…ARFL. A compositionally biased stretch (basic residues) spans 160–175; it reads VARHRPASLRRPARFL.

The protein belongs to the TatB family. As to quaternary structure, the Tat system comprises two distinct complexes: a TatABC complex, containing multiple copies of TatA, TatB and TatC subunits, and a separate TatA complex, containing only TatA subunits. Substrates initially bind to the TatABC complex, which probably triggers association of the separate TatA complex to form the active translocon.

It localises to the cell inner membrane. Its function is as follows. Part of the twin-arginine translocation (Tat) system that transports large folded proteins containing a characteristic twin-arginine motif in their signal peptide across membranes. Together with TatC, TatB is part of a receptor directly interacting with Tat signal peptides. TatB may form an oligomeric binding site that transiently accommodates folded Tat precursor proteins before their translocation. In Burkholderia pseudomallei (strain 1106a), this protein is Sec-independent protein translocase protein TatB.